Reading from the N-terminus, the 591-residue chain is Aspartate--tRNA(Asp/Asn) ligase (591 aa).

Residue glutamate 170 participates in L-aspartate binding. The segment at 194–197 (QLFK) is aspartate. Arginine 216 provides a ligand contact to L-aspartate. Residues 216–218 (RDE) and glutamine 225 each bind ATP. L-aspartate is bound at residue histidine 448. Residue glutamate 482 coordinates ATP. Residue arginine 489 coordinates L-aspartate. ATP is bound at residue 534-537 (GWDR). The segment at 559-591 (GGVDPLTDAPAPITEQQRKESGIDVKPEPSKPH) is disordered. A compositionally biased stretch (basic and acidic residues) spans 574 to 591 (QQRKESGIDVKPEPSKPH).

This sequence belongs to the class-II aminoacyl-tRNA synthetase family. Type 1 subfamily. Homodimer.

The protein localises to the cytoplasm. It catalyses the reaction tRNA(Asx) + L-aspartate + ATP = L-aspartyl-tRNA(Asx) + AMP + diphosphate. Functionally, aspartyl-tRNA synthetase with relaxed tRNA specificity since it is able to aspartylate not only its cognate tRNA(Asp) but also tRNA(Asn). Reaction proceeds in two steps: L-aspartate is first activated by ATP to form Asp-AMP and then transferred to the acceptor end of tRNA(Asp/Asn). The sequence is that of Aspartate--tRNA(Asp/Asn) ligase from Mycolicibacterium paratuberculosis (strain ATCC BAA-968 / K-10) (Mycobacterium paratuberculosis).